Consider the following 141-residue polypeptide: Nucleoside diphosphate kinase (141 aa).

The ATP site is built by lysine 9, phenylalanine 57, arginine 85, threonine 91, arginine 102, and asparagine 112. Histidine 115 functions as the Pros-phosphohistidine intermediate in the catalytic mechanism.

It belongs to the NDK family. As to quaternary structure, homotetramer. The cofactor is Mg(2+).

It is found in the cytoplasm. The enzyme catalyses a 2'-deoxyribonucleoside 5'-diphosphate + ATP = a 2'-deoxyribonucleoside 5'-triphosphate + ADP. The catalysed reaction is a ribonucleoside 5'-diphosphate + ATP = a ribonucleoside 5'-triphosphate + ADP. Major role in the synthesis of nucleoside triphosphates other than ATP. The ATP gamma phosphate is transferred to the NDP beta phosphate via a ping-pong mechanism, using a phosphorylated active-site intermediate. This Chlamydia trachomatis serovar A (strain ATCC VR-571B / DSM 19440 / HAR-13) protein is Nucleoside diphosphate kinase.